Reading from the N-terminus, the 197-residue chain is Transcription factor FapR (197 aa).

Belongs to the FapR family.

In terms of biological role, transcriptional factor involved in regulation of membrane lipid biosynthesis by repressing genes involved in fatty acid and phospholipid metabolism. This is Transcription factor FapR from Bacillus anthracis (strain A0248).